The chain runs to 343 residues: Mas-related G-protein coupled receptor member F (343 aa).

At 1-44 (MAGNCSWEAHSTNQNKMCPGMSEALELYSRGFLTIEQIATLPPP) the chain is on the extracellular side. N-linked (GlcNAc...) asparagine glycosylation occurs at Asn4. A helical membrane pass occupies residues 45–66 (AVTNYIFLLLCLCGLVGNGLVL). Over 67–82 (WFFGFSIKRTPFSIYF) the chain is Cytoplasmic. Residues 83 to 104 (LHLASADGIYLFSKAVIALLNM) form a helical membrane-spanning segment. Topologically, residues 105–123 (GTFLGSFPDYVRRVSRIVG) are extracellular. A helical membrane pass occupies residues 124–144 (LCTFFAGVSLLPAISIERCVS). Residues 145-160 (VIFPMWYWRRRPKRLS) are Cytoplasmic-facing. The chain crosses the membrane as a helical span at residues 161-181 (AGVCALLWLLSFLVTSIHNYF). Residues 182–198 (CMFLGHEASGTACLNMD) lie on the Extracellular side of the membrane. The chain crosses the membrane as a helical span at residues 199–220 (ISLGILLFFLFCPLMVLPCLAL). Topologically, residues 221-241 (ILHVECRARRRQRSAKLNHVV) are cytoplasmic. Residues 242–263 (LAIVSVFLVSSIYLGIDWFLFW) form a helical membrane-spanning segment. Residues 264 to 273 (VFQIPAPFPE) lie on the Extracellular side of the membrane. The chain crosses the membrane as a helical span at residues 274 to 294 (YVTDLCICINSSAKPIVYFLA). Residues 295–343 (GRDKSQRLWEPLRVVFQRALRDGAEPGDAASSTPNTVTMEMQCPSGNAS) lie on the Cytoplasmic side of the membrane. Residues 318–343 (AEPGDAASSTPNTVTMEMQCPSGNAS) form a disordered region. A compositionally biased stretch (polar residues) spans 324 to 343 (ASSTPNTVTMEMQCPSGNAS).

The protein belongs to the G-protein coupled receptor 1 family. Mas subfamily. As to expression, gut, vas deferens, uterus and aorta; barely detectable in liver, kidney, lung, and salivary gland. In the brain, markedly abundant in the cerebellum.

The protein localises to the cell membrane. Functionally, orphan receptor. May bind to a neuropeptide and may regulate nociceptor function and/or development, including the sensation or modulation of pain. The protein is Mas-related G-protein coupled receptor member F (Mrgprf) of Rattus norvegicus (Rat).